The primary structure comprises 700 residues: Transketolase (700 aa).

Thr2 is subject to N-acetylthreonine. His45 provides a ligand contact to substrate. Thiamine diphosphate is bound by residues Thr48, His85, 133-135 (GPL), and Leu135. Asp177 lines the Mg(2+) pocket. Thiamine diphosphate-binding residues include Gly178 and Asn207. Mg(2+)-binding residues include Asn207 and Ile209. Substrate-binding residues include His283, Arg378, and Ser405. A thiamine diphosphate-binding site is contributed by His283. Catalysis depends on Glu441, which acts as the Proton donor. Thiamine diphosphate is bound at residue Phe467. Substrate-binding residues include His491, Asp499, and Arg552.

Belongs to the transketolase family. Homodimer. The cofactor is Mg(2+). Requires Ca(2+) as cofactor. Mn(2+) is required as a cofactor. Co(2+) serves as cofactor. It depends on thiamine diphosphate as a cofactor.

The catalysed reaction is D-sedoheptulose 7-phosphate + D-glyceraldehyde 3-phosphate = aldehydo-D-ribose 5-phosphate + D-xylulose 5-phosphate. In terms of biological role, catalyzes the reversible transfer of a two-carbon ketol group from sedoheptulose-7-phosphate to glyceraldehyde-3-phosphate, producing xylulose-5-phosphate and ribose-5-phosphate. Catalyzes the transfer of a two-carbon ketol group from a ketose donor to an aldose acceptor, via a covalent intermediate with the cofactor thiamine pyrophosphate. This is Transketolase (tkt) from Mycobacterium tuberculosis (strain ATCC 25618 / H37Rv).